The following is a 1363-amino-acid chain: Tonsoku-like protein (1363 aa).

TPR repeat units follow at residues 27–60 (AAYCHQLGELLASHGRFKDALEEHQQELHLLESV), 67–100 (AVAHRKIGERLAEMENYSAALKHQHLYLDLAGSL), 107–147 (QRAW…VDEK), 162–195 (TRLYLNLGLTCESLQQTALCNNYFKKSIFLAEQN), 202–235 (FRARYNLGAIHWRGGQHSQAMRCLEGARECARAM), 242–275 (SECCVLVSQVLQDLGDFLAAKRALKKAYRLGSQK), 311–344 (MAICEQLGDLFSKAGDFPKAAEAYQKQLHLAELL), and 352–385 (AVIHVSLATTLGDMKDHRKAVHHYEEELRLRKGN). A disordered region spans residues 460–511 (SMAKDTEEEEEEEEEEEEEASEAPETSELELSESEDDADGLSQQLEEDEELQ). A compositionally biased stretch (acidic residues) spans 465–510 (TEEEEEEEEEEEEEASEAPETSELELSESEDDADGLSQQLEEDEEL). ANK repeat units lie at residues 528-557 (MGETLLHRACIEGQLRRVQDLVKQGHPLNP), 561-590 (CGWTPLHEACNYGHLEIVRFLLDHGAAVDD), and 597-626 (DGITPLHDALNCGHFEVAELLIERGASVTL). The interval 662 to 786 (ERLQMASSGQ…KSRETATSSA (125 aa)) is disordered. Residues 666 to 684 (MASSGQASRSSPALQTIPS) show a composition bias toward polar residues. Pro residues predominate over residues 692–713 (TSPPSSPCPEPSSYTPRPPEAS). Residues 771–780 (KIPDPPKSRE) are compositionally biased toward basic and acidic residues. An Omega-N-methylarginine modification is found at arginine 796. 2 disordered regions span residues 841-866 (PLTRSGRPSTSVSDYERCPARPRTRV) and 883-909 (AGDGSLNAEPAENPSVPRTSGPNKENY). A compositionally biased stretch (polar residues) spans 842 to 853 (LTRSGRPSTSVS). 10 LRR repeats span residues 1060–1081 (ALRELRLAGNRLGDACATELLA), 1088–1108 (NLVLLDLSSNHLGQEGLRQLV), 1119–1140 (NLEELDLSMNPLGDGCGQALAS), 1147–1168 (MLSTLRLQACGFSSSFFLSHQA), 1179–1199 (HLKTLSLSYNLLGAPALARVL), 1206–1214 (TLKRLDLSS), 1238–1261 (ALAHLTLSANCLGDKAVRELSRCL), 1266–1287 (SLTSLDLSANPEVSCASLEELL), 1296–1317 (GLSFLGLSGCSIQGPLNSDLWD), and 1322–1343 (QLQELQLCTKDLSTKDRDSVCQ).

This sequence belongs to the Tonsoku family. In terms of assembly, component of the MMS22L-TONSL complex, a complex at least composed of MMS22L and TONSL/NFKBIL2. Interacts with the MCM complex, the FACT complex and the RPA complex. Interacts with MCM5; the interaction is direct. Binds histones, with a strong preference for histone H3.1 (histones H3.1 and H3-4/H3.1t). Interacts (via ANK repeats) with histone H4; specifically binds histone H4 lacking methylation at 'Lys-20' (H4K20me0). May interact with DNAJC9; the interaction seems to be histone-dependent.

The protein resides in the nucleus. Its subcellular location is the chromosome. The protein localises to the cytoplasm. Functionally, component of the MMS22L-TONSL complex, a complex that promotes homologous recombination-mediated repair of double-strand breaks (DSBs) at stalled or collapsed replication forks. The MMS22L-TONSL complex is required to maintain genome integrity during DNA replication. It mediates the assembly of RAD51 filaments on single-stranded DNA (ssDNA): the MMS22L-TONSL complex is recruited to DSBs following histone replacement by histone chaperones and eviction of the replication protein A complex (RPA/RP-A) from DSBs. Following recruitment to DSBs, the TONSL-MMS22L complex promotes recruitment of RAD51 filaments and subsequent homologous recombination. Within the complex, TONSL acts as a histone reader, which recognizes and binds newly synthesized histones following their replacement by histone chaperones. Specifically binds histone H4 lacking methylation at 'Lys-20' (H4K20me0) and histone H3.1. The sequence is that of Tonsoku-like protein from Mus musculus (Mouse).